A 189-amino-acid chain; its full sequence is Probable DNA-directed RNA polymerase subunit delta (189 aa).

The region spanning 14–81 (LSMIEVAHAI…GENVWALRTW (68 aa)) is the HTH HARE-type domain. Acidic residues-rich tracts occupy residues 90–100 (EVDHPEDDGDE) and 118–189 (EGDD…EDEE). Residues 90 to 189 (EVDHPEDDGD…DDLDDDEDEE (100 aa)) are disordered.

The protein belongs to the RpoE family. As to quaternary structure, RNAP is composed of a core of 2 alpha, a beta and a beta' subunits. The core is associated with a delta subunit and one of several sigma factors.

Participates in both the initiation and recycling phases of transcription. In the presence of the delta subunit, RNAP displays an increased specificity of transcription, a decreased affinity for nucleic acids, and an increased efficiency of RNA synthesis because of enhanced recycling. In Lactobacillus delbrueckii subsp. bulgaricus (strain ATCC 11842 / DSM 20081 / BCRC 10696 / JCM 1002 / NBRC 13953 / NCIMB 11778 / NCTC 12712 / WDCM 00102 / Lb 14), this protein is Probable DNA-directed RNA polymerase subunit delta.